A 186-amino-acid polypeptide reads, in one-letter code: MKTAHEIRPGNVIMLDGSPWVVQKTETTRSGRNAAIVKLKLKNLLLNSGTETTFKGEDKLEDIILDRLDCTYSYFADPMFVFMDAEYNQYDVEAENLGDAAAYIVDGMEETCQVTFYDGKAISVEMPTTIVREVIYTEPSARGDTSGKVMKPATITGGGTVTVADFVKVGDKIEIDTRTGEFKKRV.

It belongs to the elongation factor P family.

The protein localises to the cytoplasm. It participates in protein biosynthesis; polypeptide chain elongation. In terms of biological role, involved in peptide bond synthesis. Stimulates efficient translation and peptide-bond synthesis on native or reconstituted 70S ribosomes in vitro. Probably functions indirectly by altering the affinity of the ribosome for aminoacyl-tRNA, thus increasing their reactivity as acceptors for peptidyl transferase. In Shewanella baltica (strain OS223), this protein is Elongation factor P.